The chain runs to 284 residues: Nucleotide-binding protein Sbal223_0704 (284 aa).

8-15 (GRSGSGKS) provides a ligand contact to ATP. 56-59 (DVRN) contacts GTP.

Belongs to the RapZ-like family.

Functionally, displays ATPase and GTPase activities. The protein is Nucleotide-binding protein Sbal223_0704 of Shewanella baltica (strain OS223).